Reading from the N-terminus, the 240-residue chain is Ubiquinone biosynthesis O-methyltransferase (240 aa).

Residues R44, G64, D85, and M129 each contribute to the S-adenosyl-L-methionine site.

It belongs to the methyltransferase superfamily. UbiG/COQ3 family.

The catalysed reaction is a 3-demethylubiquinol + S-adenosyl-L-methionine = a ubiquinol + S-adenosyl-L-homocysteine + H(+). It carries out the reaction a 3-(all-trans-polyprenyl)benzene-1,2-diol + S-adenosyl-L-methionine = a 2-methoxy-6-(all-trans-polyprenyl)phenol + S-adenosyl-L-homocysteine + H(+). It participates in cofactor biosynthesis; ubiquinone biosynthesis. O-methyltransferase that catalyzes the 2 O-methylation steps in the ubiquinone biosynthetic pathway. The protein is Ubiquinone biosynthesis O-methyltransferase of Escherichia coli O8 (strain IAI1).